Consider the following 195-residue polypeptide: Peptidyl-tRNA hydrolase (195 aa).

Tyrosine 17 provides a ligand contact to tRNA. Histidine 22 (proton acceptor) is an active-site residue. Positions 68, 70, and 116 each coordinate tRNA.

Belongs to the PTH family. In terms of assembly, monomer.

It localises to the cytoplasm. The enzyme catalyses an N-acyl-L-alpha-aminoacyl-tRNA + H2O = an N-acyl-L-amino acid + a tRNA + H(+). Hydrolyzes ribosome-free peptidyl-tRNAs (with 1 or more amino acids incorporated), which drop off the ribosome during protein synthesis, or as a result of ribosome stalling. Its function is as follows. Catalyzes the release of premature peptidyl moieties from peptidyl-tRNA molecules trapped in stalled 50S ribosomal subunits, and thus maintains levels of free tRNAs and 50S ribosomes. In Shewanella putrefaciens (strain CN-32 / ATCC BAA-453), this protein is Peptidyl-tRNA hydrolase.